We begin with the raw amino-acid sequence, 517 residues long: AAA ATPase forming ring-shaped complexes (517 aa).

The stretch at 25 to 53 (ARNAKLVELLQASRTKLEEINGRLEALAE) forms a coiled coil. 233–238 (GNGKTL) lines the ATP pocket.

The protein belongs to the AAA ATPase family. Homohexamer. Assembles into a hexameric ring structure.

This Corynebacterium jeikeium (strain K411) protein is AAA ATPase forming ring-shaped complexes.